Here is a 65-residue protein sequence, read N- to C-terminus: UPF0434 protein RPD_0454 (65 aa).

This sequence belongs to the UPF0434 family.

The protein is UPF0434 protein RPD_0454 of Rhodopseudomonas palustris (strain BisB5).